We begin with the raw amino-acid sequence, 155 residues long: Large ribosomal subunit protein uL22 (155 aa).

This sequence belongs to the universal ribosomal protein uL22 family. Part of the 50S ribosomal subunit.

This protein binds specifically to 23S rRNA. It makes multiple contacts with different domains of the 23S rRNA in the assembled 50S subunit and ribosome. Its function is as follows. The globular domain of the protein is located near the polypeptide exit tunnel on the outside of the subunit, while an extended beta-hairpin is found that lines the wall of the exit tunnel in the center of the 70S ribosome. In Pyrococcus horikoshii (strain ATCC 700860 / DSM 12428 / JCM 9974 / NBRC 100139 / OT-3), this protein is Large ribosomal subunit protein uL22.